A 414-amino-acid polypeptide reads, in one-letter code: Tryptophan synthase beta chain (414 aa).

A disordered region spans residues 1-28 (MVSTISRQDQNNNDDLNQPSKEGRFGKY). A compositionally biased stretch (low complexity) spans 8-18 (QDQNNNDDLNQ). Lysine 108 carries the post-translational modification N6-(pyridoxal phosphate)lysine.

Belongs to the TrpB family. As to quaternary structure, tetramer of two alpha and two beta chains. Pyridoxal 5'-phosphate serves as cofactor.

The enzyme catalyses (1S,2R)-1-C-(indol-3-yl)glycerol 3-phosphate + L-serine = D-glyceraldehyde 3-phosphate + L-tryptophan + H2O. Its pathway is amino-acid biosynthesis; L-tryptophan biosynthesis; L-tryptophan from chorismate: step 5/5. The beta subunit is responsible for the synthesis of L-tryptophan from indole and L-serine. The polypeptide is Tryptophan synthase beta chain (Prochlorococcus marinus subsp. pastoris (strain CCMP1986 / NIES-2087 / MED4)).